The chain runs to 481 residues: Proline--tRNA ligase (481 aa).

It belongs to the class-II aminoacyl-tRNA synthetase family. ProS type 3 subfamily. As to quaternary structure, homodimer.

The protein resides in the cytoplasm. The catalysed reaction is tRNA(Pro) + L-proline + ATP = L-prolyl-tRNA(Pro) + AMP + diphosphate. Its function is as follows. Catalyzes the attachment of proline to tRNA(Pro) in a two-step reaction: proline is first activated by ATP to form Pro-AMP and then transferred to the acceptor end of tRNA(Pro). This Saccharolobus islandicus (strain M.16.27) (Sulfolobus islandicus) protein is Proline--tRNA ligase.